A 461-amino-acid chain; its full sequence is Photosystem II CP43 reaction center protein (461 aa).

Positions 1–2 are excised as a propeptide; it reads ME. Threonine 3 carries the post-translational modification N-acetylthreonine. Threonine 3 is subject to Phosphothreonine. The next 5 membrane-spanning stretches (helical) occupy residues 57–81, 122–143, 166–188, 243–263, and 279–300; these read LFEV…PHLA, LLGP…KDRN, KALY…RKIS, KPFA…LSYS, and WFNN…ASQA. Position 355 (glutamate 355) interacts with [CaMn4O5] cluster. The chain crosses the membrane as a helical span at residues 435 to 459; sequence RARAAAAGFEKGIDRDFEPVLSMTP.

The protein belongs to the PsbB/PsbC family. PsbC subfamily. In terms of assembly, PSII is composed of 1 copy each of membrane proteins PsbA, PsbB, PsbC, PsbD, PsbE, PsbF, PsbH, PsbI, PsbJ, PsbK, PsbL, PsbM, PsbT, PsbX, PsbY, PsbZ, Psb30/Ycf12, at least 3 peripheral proteins of the oxygen-evolving complex and a large number of cofactors. It forms dimeric complexes. Binds multiple chlorophylls and provides some of the ligands for the Ca-4Mn-5O cluster of the oxygen-evolving complex. It may also provide a ligand for a Cl- that is required for oxygen evolution. PSII binds additional chlorophylls, carotenoids and specific lipids. is required as a cofactor.

It is found in the plastid. The protein resides in the chloroplast thylakoid membrane. Functionally, one of the components of the core complex of photosystem II (PSII). It binds chlorophyll and helps catalyze the primary light-induced photochemical processes of PSII. PSII is a light-driven water:plastoquinone oxidoreductase, using light energy to abstract electrons from H(2)O, generating O(2) and a proton gradient subsequently used for ATP formation. This Trachelium caeruleum (Blue throatwort) protein is Photosystem II CP43 reaction center protein.